The following is a 701-amino-acid chain: Protein UL29/UL28 (701 aa).

The segment at 1–33 (MSGRRKGCSAATASSSSSSPPSRLPPLPGHARR) is disordered.

This sequence belongs to the herpesviridae US22 family. In terms of assembly, interacts with UL38 and host HDAC1; these interactions are necessary for the HDAC1 interaction with UL38. Interacts with host MTA2.

The protein localises to the virion. The protein resides in the host nucleus. It localises to the host cytoplasm. Functionally, contributes to activation of immediate-early gene expression. In Homo sapiens (Human), this protein is Protein UL29/UL28 (UL29).